The chain runs to 326 residues: Biotin synthase (326 aa).

The 231-residue stretch at 41-271 (YHVQLASLLS…EARVRLSAGR (231 aa)) folds into the Radical SAM core domain. Residues cysteine 56, cysteine 60, and cysteine 63 each contribute to the [4Fe-4S] cluster site. Residues cysteine 102, cysteine 134, cysteine 194, and arginine 266 each coordinate [2Fe-2S] cluster.

Belongs to the radical SAM superfamily. Biotin synthase family. Homodimer. [4Fe-4S] cluster serves as cofactor. It depends on [2Fe-2S] cluster as a cofactor.

The enzyme catalyses (4R,5S)-dethiobiotin + (sulfur carrier)-SH + 2 reduced [2Fe-2S]-[ferredoxin] + 2 S-adenosyl-L-methionine = (sulfur carrier)-H + biotin + 2 5'-deoxyadenosine + 2 L-methionine + 2 oxidized [2Fe-2S]-[ferredoxin]. It functions in the pathway cofactor biosynthesis; biotin biosynthesis; biotin from 7,8-diaminononanoate: step 2/2. In terms of biological role, catalyzes the conversion of dethiobiotin (DTB) to biotin by the insertion of a sulfur atom into dethiobiotin via a radical-based mechanism. This Synechococcus sp. (strain RCC307) protein is Biotin synthase.